The following is a 299-amino-acid chain: ATP phosphoribosyltransferase (299 aa).

It belongs to the ATP phosphoribosyltransferase family. Long subfamily. The cofactor is Mg(2+).

The protein resides in the cytoplasm. The catalysed reaction is 1-(5-phospho-beta-D-ribosyl)-ATP + diphosphate = 5-phospho-alpha-D-ribose 1-diphosphate + ATP. It participates in amino-acid biosynthesis; L-histidine biosynthesis; L-histidine from 5-phospho-alpha-D-ribose 1-diphosphate: step 1/9. With respect to regulation, feedback inhibited by histidine. Its function is as follows. Catalyzes the condensation of ATP and 5-phosphoribose 1-diphosphate to form N'-(5'-phosphoribosyl)-ATP (PR-ATP). Has a crucial role in the pathway because the rate of histidine biosynthesis seems to be controlled primarily by regulation of HisG enzymatic activity. The sequence is that of ATP phosphoribosyltransferase from Actinobacillus pleuropneumoniae serotype 5b (strain L20).